Here is a 1584-residue protein sequence, read N- to C-terminus: Cilia- and flagella-associated protein 74 (1584 aa).

Residues 300 to 379 (RKFQAWDRAK…EAEEEKRKKQ (80 aa)) adopt a coiled-coil conformation. The span at 692–706 (SEQQLEGTESSQADM) shows a compositional bias: polar residues. Positions 692–739 (SEQQLEGTESSQADMQSRKELEKLDKEQEEEQPAEPERLTTVIPPSEE) are disordered. The span at 707–717 (QSRKELEKLDK) shows a compositional bias: basic and acidic residues.

It belongs to the CFAP74 family.

It localises to the cytoplasm. Its subcellular location is the cytoskeleton. The protein localises to the cilium axoneme. The protein resides in the flagellum axoneme. In terms of biological role, as part of the central apparatus of the cilium axoneme may play a role in cilium movement. May play an important role in sperm architecture and function. The protein is Cilia- and flagella-associated protein 74 of Homo sapiens (Human).